The following is a 368-amino-acid chain: MCAKKEEEEEEEEDSSEAMNNIQNYQNDLFFHQLISHHHHHHHDPSQSETLGASGNVGSGFTIFSQDSVSPIWSLPPPTSIQPPFDQFPPPSSSPASFYGSFFNRSRAHHQGLQFGYEGFGGATSAAHHHHEQLRILSEALGPVVQAGSGPFGLQAELGKMTAQEIMDAKALAASKSHSEAERRRRERINNHLAKLRSILPNTTKTDKASLLAEVIQHVKELKRETSVISETNLVPTESDELTVAFTEEEETGDGRFVIKASLCCEDRSDLLPDMIKTLKAMRLKTLKAEITTVGGRVKNVLFVTGEESSGEEVEEEYCIGTIEEALKAVMEKSNVEESSSSGNAKRQRMSSHNTITIVEQQQQYNQR.

Positions 3–30 (AKKEEEEEEEEDSSEAMNNIQNYQNDLF) form a coiled coil. Positions 173–222 (AASKSHSEAERRRRERINNHLAKLRSILPNTTKTDKASLLAEVIQHVKEL) constitute a bHLH domain. Residues 333-368 (KSNVEESSSSGNAKRQRMSSHNTITIVEQQQQYNQR) form a disordered region. Residues 337 to 368 (EESSSSGNAKRQRMSSHNTITIVEQQQQYNQR) show a composition bias toward polar residues.

As to quaternary structure, homodimer. Interacts with LHW.

The protein resides in the nucleus. This chain is Transcription factor bHLH30 (BHLH30), found in Arabidopsis thaliana (Mouse-ear cress).